Reading from the N-terminus, the 323-residue chain is ADP-L-glycero-D-manno-heptose-6-epimerase (323 aa).

NADP(+) is bound by residues 10-11 (FI), 31-32 (DN), Lys-38, Lys-53, 75-79 (EGACS), and Asn-92. The Proton acceptor role is filled by Tyr-139. Lys-143 is a binding site for NADP(+). Asn-168 provides a ligand contact to substrate. NADP(+)-binding residues include Val-169 and Lys-177. The active-site Proton acceptor is Lys-177. Residues Asp-179, Lys-186, 200–203 (FGAY), Arg-213, and Tyr-277 contribute to the substrate site.

The protein belongs to the NAD(P)-dependent epimerase/dehydratase family. HldD subfamily. In terms of assembly, homopentamer. The cofactor is NADP(+).

It carries out the reaction ADP-D-glycero-beta-D-manno-heptose = ADP-L-glycero-beta-D-manno-heptose. It functions in the pathway nucleotide-sugar biosynthesis; ADP-L-glycero-beta-D-manno-heptose biosynthesis; ADP-L-glycero-beta-D-manno-heptose from D-glycero-beta-D-manno-heptose 7-phosphate: step 4/4. Catalyzes the interconversion between ADP-D-glycero-beta-D-manno-heptose and ADP-L-glycero-beta-D-manno-heptose via an epimerization at carbon 6 of the heptose. This is ADP-L-glycero-D-manno-heptose-6-epimerase from Hydrogenovibrio crunogenus (strain DSM 25203 / XCL-2) (Thiomicrospira crunogena).